The primary structure comprises 342 residues: Farnesyl pyrophosphate synthase 1 (342 aa).

Isopentenyl diphosphate-binding residues include Lys47, Arg50, and Gln86. Positions 93 and 97 each coordinate Mg(2+). Arg102 contacts dimethylallyl diphosphate. Residue Arg103 coordinates isopentenyl diphosphate. Residues Lys190, Thr191, Gln229, Lys246, and Lys255 each coordinate dimethylallyl diphosphate.

This sequence belongs to the FPP/GGPP synthase family. Mg(2+) is required as a cofactor.

Its subcellular location is the cytoplasm. It carries out the reaction isopentenyl diphosphate + dimethylallyl diphosphate = (2E)-geranyl diphosphate + diphosphate. It catalyses the reaction isopentenyl diphosphate + (2E)-geranyl diphosphate = (2E,6E)-farnesyl diphosphate + diphosphate. The protein operates within isoprenoid biosynthesis; farnesyl diphosphate biosynthesis; farnesyl diphosphate from geranyl diphosphate and isopentenyl diphosphate: step 1/1. It participates in isoprenoid biosynthesis; geranyl diphosphate biosynthesis; geranyl diphosphate from dimethylallyl diphosphate and isopentenyl diphosphate: step 1/1. Functionally, catalyzes the sequential condensation of isopentenyl pyrophosphate with the allylic pyrophosphates, dimethylallyl pyrophosphate, and then with the resultant geranylpyrophosphate to the ultimate product farnesyl pyrophosphate. The protein is Farnesyl pyrophosphate synthase 1 (FPS1) of Lupinus albus (White lupine).